A 380-amino-acid chain; its full sequence is Protein kinase ORF15 (380 aa).

Positions 93-371 (FIPVKVAGCL…LLIAQLTKFI (279 aa)) constitute a Protein kinase domain. Position 118 (K118) interacts with ATP. D217 (proton acceptor) is an active-site residue.

This sequence belongs to the protein kinase superfamily. Ser/Thr protein kinase family.

The enzyme catalyses L-seryl-[protein] + ATP = O-phospho-L-seryl-[protein] + ADP + H(+). The catalysed reaction is L-threonyl-[protein] + ATP = O-phospho-L-threonyl-[protein] + ADP + H(+). The protein is Protein kinase ORF15 (ORF15) of Ictalurid herpesvirus 1 (strain Auburn) (IcHV-1).